A 503-amino-acid polypeptide reads, in one-letter code: Glutamyl-tRNA(Gln) amidotransferase subunit A (503 aa).

Catalysis depends on charge relay system residues lysine 79 and serine 154. The active-site Acyl-ester intermediate is serine 178.

Belongs to the amidase family. GatA subfamily. Heterotrimer of A, B and C subunits.

The catalysed reaction is L-glutamyl-tRNA(Gln) + L-glutamine + ATP + H2O = L-glutaminyl-tRNA(Gln) + L-glutamate + ADP + phosphate + H(+). Its function is as follows. Allows the formation of correctly charged Gln-tRNA(Gln) through the transamidation of misacylated Glu-tRNA(Gln) in organisms which lack glutaminyl-tRNA synthetase. The reaction takes place in the presence of glutamine and ATP through an activated gamma-phospho-Glu-tRNA(Gln). The chain is Glutamyl-tRNA(Gln) amidotransferase subunit A from Agathobacter rectalis (strain ATCC 33656 / DSM 3377 / JCM 17463 / KCTC 5835 / VPI 0990) (Eubacterium rectale).